Consider the following 152-residue polypeptide: Large ribosomal subunit protein bL9 (152 aa).

Belongs to the bacterial ribosomal protein bL9 family.

Binds to the 23S rRNA. The sequence is that of Large ribosomal subunit protein bL9 from Pelagibacter ubique (strain HTCC1062).